Reading from the N-terminus, the 101-residue chain is Integration host factor subunit beta (101 aa).

The segment at 62 to 84 is disordered; it reads RNPKTGESVALPGKHVPHFKPGK.

It belongs to the bacterial histone-like protein family. Heterodimer of an alpha and a beta chain.

In terms of biological role, this protein is one of the two subunits of integration host factor, a specific DNA-binding protein that functions in genetic recombination as well as in transcriptional and translational control. This Stenotrophomonas maltophilia (strain K279a) protein is Integration host factor subunit beta.